We begin with the raw amino-acid sequence, 747 residues long: AMP deaminase 1 (747 aa).

Thr81 is modified (phosphothreonine). Residue Ser85 is modified to Phosphoserine. At Tyr216 the chain carries Phosphotyrosine. Zn(2+)-binding residues include His303 and His305. Substrate contacts are provided by residues His305 and 374-379 (KFNDKY). Ser441 is modified (phosphoserine). His572 is a binding site for Zn(2+). Glu575 lines the substrate pocket. The Proton acceptor role is filled by His594. Residue Asp649 participates in Zn(2+) binding. Residue 650–653 (DPMQ) coordinates substrate.

Belongs to the metallo-dependent hydrolases superfamily. Adenosine and AMP deaminases family. Homotetramer. It depends on Zn(2+) as a cofactor.

The catalysed reaction is AMP + H2O + H(+) = IMP + NH4(+). It functions in the pathway purine metabolism; IMP biosynthesis via salvage pathway; IMP from AMP: step 1/1. AMP deaminase plays a critical role in energy metabolism. This Rattus norvegicus (Rat) protein is AMP deaminase 1.